Consider the following 271-residue polypeptide: Tropinone reductase homolog At2g29360 (271 aa).

Residue 22–46 (LVTGGSKGIGEAVVEELATLGARIH) coordinates NADP(+). Ser155 lines the substrate pocket. Tyr168 functions as the Proton acceptor in the catalytic mechanism.

It belongs to the short-chain dehydrogenases/reductases (SDR) family. SDR65C subfamily.

In terms of biological role, oxidoreductase active on cyclic ketones, but not on tropinone or nortropinone. This Arabidopsis thaliana (Mouse-ear cress) protein is Tropinone reductase homolog At2g29360.